The chain runs to 424 residues: Cyclin-dependent kinase D-1 (424 aa).

Residues 19–299 form the Protein kinase domain; sequence YLKREVLGEG…AQQALEHRYF (281 aa). Residues 25 to 33 and Lys48 contribute to the ATP site; that span reads LGEGTYGVV. Thr29 bears the Phosphothreonine mark. The residue at position 30 (Tyr30) is a Phosphotyrosine. Residue Asp141 is the Proton acceptor of the active site. Phosphoserine is present on Ser168. A Phosphothreonine modification is found at Thr174. 2 disordered regions span residues 303-337 and 359-424; these read PAPTKPSQLPRPPPKGDSGNNKIPDLNLQDGPVVL and ADRT…GYTE. The span at 359–374 shows a compositional bias: basic and acidic residues; the sequence is ADRTEEHPSGARHMDD.

Belongs to the protein kinase superfamily. CMGC Ser/Thr protein kinase family. CDC2/CDKX subfamily.

It localises to the nucleus. The catalysed reaction is L-seryl-[protein] + ATP = O-phospho-L-seryl-[protein] + ADP + H(+). It catalyses the reaction L-threonyl-[protein] + ATP = O-phospho-L-threonyl-[protein] + ADP + H(+). The enzyme catalyses [DNA-directed RNA polymerase] + ATP = phospho-[DNA-directed RNA polymerase] + ADP + H(+). The polypeptide is Cyclin-dependent kinase D-1 (CDKD-1) (Oryza sativa subsp. indica (Rice)).